The sequence spans 295 residues: Ribosomal protein L11 methyltransferase (295 aa).

S-adenosyl-L-methionine-binding residues include Thr-146, Gly-167, Asp-189, and Asn-231.

This sequence belongs to the methyltransferase superfamily. PrmA family.

The protein localises to the cytoplasm. It catalyses the reaction L-lysyl-[protein] + 3 S-adenosyl-L-methionine = N(6),N(6),N(6)-trimethyl-L-lysyl-[protein] + 3 S-adenosyl-L-homocysteine + 3 H(+). Functionally, methylates ribosomal protein L11. This chain is Ribosomal protein L11 methyltransferase, found in Vibrio parahaemolyticus serotype O3:K6 (strain RIMD 2210633).